Consider the following 775-residue polypeptide: Chloride channel protein CLC-a (775 aa).

Residues 1-28 (MDEDGNLQISNSNYNGEEEGEDPENNTL) form a disordered region. A run of 12 helical transmembrane segments spans residues 88–108 (TLACLVGLFTGLIATLINLAV), 131–151 (GLMVFTGANLGLTLVATVLVV), 178–198 (FGFTTMMVKIVGSIGAVAAGL), 206–226 (LVHIGSCIASLLGQGGPDNHR), 248–268 (GSASGVCAAFRSPVGGVLFAL), 278–298 (ALLWRTFFSTAVVVVVLRAFI), 328–348 (AADIIPVTLIGVFGGILGSLY), 371–391 (VLLSLGVSLFTSVCLFGLPFL), 453–473 (MVSLWIFFGLYCILGLITFGI), 478–498 (GLFLPIILMGSAYGRMLGTAM), 510–530 (AVLGAASLMAGSMRMTVSLCV), and 531–551 (IFLELTNNLLLLPITMFVLLI). CBS domains follow at residues 595-658 (AKPP…FLNE) and 703-768 (TNTT…HLDK). The chain crosses the membrane as a helical span at residues 730–750 (HLLVVPKIQASGMSPVIGILT).

The protein belongs to the chloride channel (TC 2.A.49) family. As to quaternary structure, homodimer. Interacts with PP2A5. In terms of tissue distribution, broadly expressed in the plant.

The protein resides in the membrane. Voltage-gated chloride channel that could play a role in the regulation of nitrate content. The chain is Chloride channel protein CLC-a (CLC-A) from Arabidopsis thaliana (Mouse-ear cress).